We begin with the raw amino-acid sequence, 304 residues long: Mitochondrial glycine transporter (304 aa).

Solcar repeat units follow at residues 3 to 82 (GKSK…VREA), 106 to 186 (ENLI…LKVA), and 209 to 293 (SSAM…LVKR). 6 helical membrane passes run 9–34 (IYAG…TRVQ), 57–83 (GTLP…REAV), 108–133 (LISG…VRYE), 161–184 (GWAA…EQLK), 213–239 (INSV…KTRM), and 268–286 (GLAL…SWCI).

It belongs to the mitochondrial carrier (TC 2.A.29) family. SLC25A38 subfamily.

The protein localises to the mitochondrion inner membrane. The enzyme catalyses glycine(in) = glycine(out). Functionally, mitochondrial glycine transporter that imports glycine into the mitochondrial matrix. Plays an important role in providing glycine for the first enzymatic step in heme biosynthesis, the condensation of glycine with succinyl-CoA to produce 5-aminolevulinate (ALA) in the mitochondrial matrix. In Yarrowia lipolytica (strain CLIB 122 / E 150) (Yeast), this protein is Mitochondrial glycine transporter.